Consider the following 260-residue polypeptide: 3-methyl-2-oxobutanoate hydroxymethyltransferase (260 aa).

Positions 42 and 81 each coordinate Mg(2+). 3-methyl-2-oxobutanoate contacts are provided by residues 42 to 43, D81, and K109; that span reads DS. E111 contributes to the Mg(2+) binding site. Residue E178 is the Proton acceptor of the active site.

The protein belongs to the PanB family. In terms of assembly, homodecamer; pentamer of dimers. Mg(2+) serves as cofactor.

It is found in the cytoplasm. It carries out the reaction 3-methyl-2-oxobutanoate + (6R)-5,10-methylene-5,6,7,8-tetrahydrofolate + H2O = 2-dehydropantoate + (6S)-5,6,7,8-tetrahydrofolate. Its pathway is cofactor biosynthesis; (R)-pantothenate biosynthesis; (R)-pantoate from 3-methyl-2-oxobutanoate: step 1/2. Its function is as follows. Catalyzes the reversible reaction in which hydroxymethyl group from 5,10-methylenetetrahydrofolate is transferred onto alpha-ketoisovalerate to form ketopantoate. The protein is 3-methyl-2-oxobutanoate hydroxymethyltransferase of Vesicomyosocius okutanii subsp. Calyptogena okutanii (strain HA).